The primary structure comprises 231 residues: Small ribosomal subunit protein uS3 (231 aa).

Positions 39 to 107 (IRKFIKEKLF…QVSVNIVEIK (69 aa)) constitute a KH type-2 domain.

This sequence belongs to the universal ribosomal protein uS3 family. Part of the 30S ribosomal subunit. Forms a tight complex with proteins S10 and S14.

In terms of biological role, binds the lower part of the 30S subunit head. Binds mRNA in the 70S ribosome, positioning it for translation. This chain is Small ribosomal subunit protein uS3, found in Pelotomaculum thermopropionicum (strain DSM 13744 / JCM 10971 / SI).